A 459-amino-acid polypeptide reads, in one-letter code: Cysteine--tRNA ligase (459 aa).

A Zn(2+)-binding site is contributed by cysteine 28. Residues 30-40 (VTIYDLCHIGH) carry the 'HIGH' region motif. 3 residues coordinate Zn(2+): cysteine 209, histidine 234, and glutamate 238. Positions 266–270 (KMSKS) match the 'KMSKS' region motif. Lysine 269 lines the ATP pocket.

The protein belongs to the class-I aminoacyl-tRNA synthetase family. In terms of assembly, monomer. It depends on Zn(2+) as a cofactor.

Its subcellular location is the cytoplasm. It catalyses the reaction tRNA(Cys) + L-cysteine + ATP = L-cysteinyl-tRNA(Cys) + AMP + diphosphate. This is Cysteine--tRNA ligase from Shewanella loihica (strain ATCC BAA-1088 / PV-4).